The chain runs to 294 residues: UDP-3-O-acyl-N-acetylglucosamine deacetylase (294 aa).

The Zn(2+) site is built by His75, His232, and Asp236. Residue His259 is the Proton donor of the active site.

Belongs to the LpxC family. The cofactor is Zn(2+).

It catalyses the reaction a UDP-3-O-[(3R)-3-hydroxyacyl]-N-acetyl-alpha-D-glucosamine + H2O = a UDP-3-O-[(3R)-3-hydroxyacyl]-alpha-D-glucosamine + acetate. It participates in glycolipid biosynthesis; lipid IV(A) biosynthesis; lipid IV(A) from (3R)-3-hydroxytetradecanoyl-[acyl-carrier-protein] and UDP-N-acetyl-alpha-D-glucosamine: step 2/6. Catalyzes the hydrolysis of UDP-3-O-myristoyl-N-acetylglucosamine to form UDP-3-O-myristoylglucosamine and acetate, the committed step in lipid A biosynthesis. This is UDP-3-O-acyl-N-acetylglucosamine deacetylase from Campylobacter concisus (strain 13826).